The following is a 428-amino-acid chain: Serine--tRNA ligase (428 aa).

231–233 (TSE) is an L-serine binding site. ATP contacts are provided by residues 262–264 (RRE) and Val278. Glu285 provides a ligand contact to L-serine. 349 to 352 (ELTS) is an ATP binding site. Residue Thr384 coordinates L-serine.

This sequence belongs to the class-II aminoacyl-tRNA synthetase family. Type-1 seryl-tRNA synthetase subfamily. Homodimer. The tRNA molecule binds across the dimer.

It localises to the cytoplasm. It carries out the reaction tRNA(Ser) + L-serine + ATP = L-seryl-tRNA(Ser) + AMP + diphosphate + H(+). The enzyme catalyses tRNA(Sec) + L-serine + ATP = L-seryl-tRNA(Sec) + AMP + diphosphate + H(+). It functions in the pathway aminoacyl-tRNA biosynthesis; selenocysteinyl-tRNA(Sec) biosynthesis; L-seryl-tRNA(Sec) from L-serine and tRNA(Sec): step 1/1. Catalyzes the attachment of serine to tRNA(Ser). Is also able to aminoacylate tRNA(Sec) with serine, to form the misacylated tRNA L-seryl-tRNA(Sec), which will be further converted into selenocysteinyl-tRNA(Sec). This Bifidobacterium animalis subsp. lactis (strain AD011) protein is Serine--tRNA ligase.